Consider the following 477-residue polypeptide: tRNA-2-methylthio-N(6)-dimethylallyladenosine synthase (477 aa).

Residues Lys3 to Glu120 form the MTTase N-terminal domain. Cys12, Cys49, Cys83, Cys157, Cys161, and Cys164 together coordinate [4Fe-4S] cluster. The Radical SAM core domain maps to Arg143 to Gln375. Residues Arg378–Arg441 form the TRAM domain.

It belongs to the methylthiotransferase family. MiaB subfamily. Monomer. The cofactor is [4Fe-4S] cluster.

Its subcellular location is the cytoplasm. The catalysed reaction is N(6)-dimethylallyladenosine(37) in tRNA + (sulfur carrier)-SH + AH2 + 2 S-adenosyl-L-methionine = 2-methylsulfanyl-N(6)-dimethylallyladenosine(37) in tRNA + (sulfur carrier)-H + 5'-deoxyadenosine + L-methionine + A + S-adenosyl-L-homocysteine + 2 H(+). Catalyzes the methylthiolation of N6-(dimethylallyl)adenosine (i(6)A), leading to the formation of 2-methylthio-N6-(dimethylallyl)adenosine (ms(2)i(6)A) at position 37 in tRNAs that read codons beginning with uridine. The protein is tRNA-2-methylthio-N(6)-dimethylallyladenosine synthase of Aeromonas salmonicida (strain A449).